We begin with the raw amino-acid sequence, 205 residues long: Cytochrome c biogenesis ATP-binding export protein CcmA 1 (205 aa).

The ABC transporter domain maps to 2–205 (LEARDLYCER…LALTGGGAGL (204 aa)). Residue 34–41 (GGNGAGKT) coordinates ATP.

It belongs to the ABC transporter superfamily. CcmA exporter (TC 3.A.1.107) family. The complex is composed of two ATP-binding proteins (CcmA) and two transmembrane proteins (CcmB).

The protein resides in the cell inner membrane. It carries out the reaction heme b(in) + ATP + H2O = heme b(out) + ADP + phosphate + H(+). Part of the ABC transporter complex CcmAB involved in the biogenesis of c-type cytochromes; once thought to export heme, this seems not to be the case, but its exact role is uncertain. Responsible for energy coupling to the transport system. The protein is Cytochrome c biogenesis ATP-binding export protein CcmA 1 of Salmonella typhimurium (strain LT2 / SGSC1412 / ATCC 700720).